We begin with the raw amino-acid sequence, 678 residues long: NADPH--cytochrome P450 reductase (678 aa).

Residue Gly-2 is modified to N-acetylglycine. At 2–21 (GDSHVDTGATSTEAVAEEVS) the chain is on the lumenal side. Residues 22-42 (LFSMTDMILLSVLVGFLTYFF) form a helical membrane-spanning segment. Topologically, residues 43-678 (LFRKKKEEIP…KGRYSLDVWS (636 aa)) are cytoplasmic. Phosphoserine is present on Ser-63. The Flavodoxin-like domain occupies 80 to 224 (IIVFYGSQTG…DFITWREQFW (145 aa)). Residues 86 to 91 (SQTGTA), 138 to 141 (ATYG), 173 to 182 (LGNKTYEHFN), and Asp-208 each bind FMN. In terms of domain architecture, FAD-binding FR-type spans 279-521 (KNPFLAAVTT…FVRKSQFRLP (243 aa)). An NADP(+)-binding site is contributed by Arg-298. FAD is bound by residues Arg-424, 454-457 (RYYS), 472-474 (CAV), Tyr-478, and 488-491 (GVAT). NADP(+) contacts are provided by residues Thr-535, 596–597 (SR), 602–606 (KVYVQ), and Asp-639. Trp-677 is an FAD binding site.

This sequence belongs to the NADPH--cytochrome P450 reductase family. It in the N-terminal section; belongs to the flavodoxin family. The protein in the C-terminal section; belongs to the flavoprotein pyridine nucleotide cytochrome reductase family. FAD is required as a cofactor. The cofactor is FMN.

It localises to the endoplasmic reticulum membrane. The catalysed reaction is 2 oxidized [cytochrome P450] + NADPH = 2 reduced [cytochrome P450] + NADP(+) + H(+). In terms of biological role, this enzyme is required for electron transfer from NADP to cytochrome P450 in microsomes. It can also provide electron transfer to heme oxygenase and cytochrome B5. The polypeptide is NADPH--cytochrome P450 reductase (Cavia porcellus (Guinea pig)).